Reading from the N-terminus, the 77-residue chain is Delta/omega-plectoxin-Pt1a (77 aa).

The first 20 residues, 1-20 (MKHLIVAVVLLSALAICTSA), serve as a signal peptide directing secretion. Positions 21-34 (EEEQVNVPFRPEER) are excised as a propeptide. 5 cysteine pairs are disulfide-bonded: Cys-38–Cys-51, Cys-45–Cys-57, Cys-50–Cys-67, Cys-54–Cys-74, and Cys-59–Cys-65. Ser-73 carries the O-palmitoyl serine lipid modification. The residue at position 74 (Cys-74) is a Cysteine amide.

Belongs to the neurotoxin 02 (plectoxin) family. 01 (Tx3) subfamily. In terms of tissue distribution, expressed by the venom gland.

The protein localises to the secreted. In terms of biological role, excitatory toxin that acts on both calcium and sodium (Nav) channels. It preferentially blocks a subset of calcium channels that is apparently not required for neurotransmitter release, it decreases threshold for sodium channel activation and it slows sodium channel inactivation. As it enhances synaptic transmission by prolonging presynaptic release of neurotransmitter, its effects on sodium and calcium channels may act synergistically to sustain the terminal excitability. The protein is Delta/omega-plectoxin-Pt1a of Plectreurys tristis (Spider).